Consider the following 2145-residue polypeptide: MAAFGLLSYEQRPLKRPRLGPPDVYPQDPKQKEDELTAVNVKQGFNNQPAFTGDEHGSARNIVINPSKIGAYFSSILAEKLKLNTFQDTGKKKPQVNAKDNYWLVTARSQSAIHSWFSDLAGNKPLSILAKKVPILSKKEDVFAYLAKYSVPMVRATWLIKMTCAYYSAISEAKIKKRQAPDPNLEWTQISTRYLREQLAKISDFYHMASSTGDGPVPVPPEVEQAMKQWEYNEKLAFHMFQEGMLEKHEYLTWILDVLEKIRPMDDDLLKLLLPLMLQYSDEFVQSAYLSRRLAYFCARRLSLLLSDSPNLLAAHSPHMMIGPNNSSIGAPSPGPPGPGMSPVQLAFSDFLSCAQHGPLVYGLSCMLQTVTLCCPSALVWNYSTNENKSANPGSPLDLLQVAPSSLPMPGGNTAFNQQVRARIYEVEQQIKQRGRAVEVRWSFDKCQESTAGVTISRVLHTLEVLDRHCFDRTDSSNSMETLYHKIFWANQNKDNQEVAPNDEAVVTLLCEWAVSCKRSGKHRAMAVAKLLEKRQAEIEAERCGESEVLDEKESISSSSLAGSSLPVFQNVLLRFLDTQAPSLSDPNSECEKVEFVNLVLLFCEFIRHDVFSHDAYMCTLISRGDLSVTASTRPRSPVGENADEHYSKDHDVKMEIFSPMPGESCENANTSLGRRMSVNCEKLVKREKPRELIFPSNYDLLRHLQYATHFPIPLDESSSHECNQRTILLYGVGKERDEARHQLKKITKDILKILNKKSTTETGVGDEGQKARKNKQETFPTLETVFTKLQLLSYFDQHQVTSQISNNVLEQITSFASGTSYHLPLAHHIQLIFDLMEPALNINGLIDFAIQLLNELSVVEAELLLKSSSLAGSYTTGLCVCIVAVLRRYHSCLILNPDQTAQVFEGLCGVVKHVVNPSECSSPERCILAYLYDLYVSCSHLRSKFGDLFSSACSKVKQTIYNNVMPANSNLRWDPDFMMDFIENPSARSINYSMLGKILSDNAANRYSFVCNTLMNVCMGHQDAGRINDIANFSSELTACCTVLSSEWLGVLKALCCSSNHVWGFNDVLCTVDVSDLSFHDSLATFIAILIARQCFSLEDVVQHVALPSLLAAACGDADAEPGARMTCRLLLHLFRAPQACFLPQATGKPFPGIRSSCDRHLLAAAHNSIEVGAVFAVLKAIMMLGDAKIGNNSVSSLKNDDFTMRGLRCDGNADDIWTASQNPKSCGKSISIETANLREYARYVLRTICQQEWVGEHCLKEPERLCTDKELILDPVLSNMQAQKLLQLICYPHGIKECTEGDNLQRQHIKRILQNLEQWTLRQSWLELQLMIKQCLKDPGSGSVAEMNNLLDNIAKATIEVFQQSADLNNSSNSGMSLFNPNSIGSADTSSTRQNGIKTFLSSSERRGVWLVAPLIARLPTSVQGRVLKAAGEELEKGQHLGSSSKKERDRQKQKSMSLLSQQPFLSLVLTCLKGQDEQREGLLTSLQNQVNQILSNWREERYQDDIKARQMMHEALQLRLNLVGGMFDTVQRSTQWTTDWALLLLQIITSGTVDMHTNNELFTTVLDMLGVLINGTLASDLSNASPGGSEENKRAYMNLVKKLKKELGDKRSESIDKVRQLLPLPKQTCDVITCEPMGSLIDTKGNKIAGFDSIDKKQGLQVSTKQKVSPWDLFEGQKNPAPLSWAWFGTVRVDRRVIKYEEQHHLLLYHTHPMPKPRSYYLQPLPLPPEEEEEEPTSPVSQEPERKSAELSDQGKTTTDEEKKTKGRKRKTKSSSRVDEYPQSNIYRVPPNYSPISSQMMHHPQSTLWGYNLVGQPQQPGFFLQNQSLTPGGSRLDPAGSFVPTNTKQALSNMLQRRSGAMMQPPSLHAITSQQQLIQMKLLQQQQQQRLLRQAQTRPFQQGQPGDQAALFAAQARPSPQLPQYPGLQQAQTMPQGYTMYGTQMPLQQTSQQQAGSVVLSPSYNSRAYPAAHSNPVLMERLRQIQQQPSGYVQQQASPYLQPLTGSQRLNHQALQQSPLVGGGIDAVLTSAHPNLPSVPLPQDPMRPRQPQVRQQQRLLQMQQPQQPQPQQPPQPQQSSQSQSQTLGLQAMQPQQPLFPRQGLQQTQQQQQTAALVRQLQKQLSSNQPQQGVTPYGHPSHF.

The tract at residues 1–30 (MAAFGLLSYEQRPLKRPRLGPPDVYPQDPK) is disordered. At Thr462 the chain carries Phosphothreonine. Residues 1436–1455 (ELEKGQHLGSSSKKERDRQK) are compositionally biased toward basic and acidic residues. 3 disordered regions span residues 1436-1460 (ELEK…KSMS), 1721-1802 (RSYY…ISSQ), and 2029-2145 (DAVL…PSHF). The span at 1768-1777 (TKGRKRKTKS) shows a compositional bias: basic residues. Residues 2052-2069 (RQPQVRQQQRLLQMQQPQ) show a composition bias toward low complexity. Residues 2070–2079 (QPQPQQPPQP) show a composition bias toward pro residues. Polar residues predominate over residues 2089–2099 (TLGLQAMQPQQ). The segment covering 2104-2124 (RQGLQQTQQQQQTAALVRQLQ) has biased composition (low complexity). The segment covering 2125 to 2136 (KQLSSNQPQQGV) has biased composition (polar residues).

Belongs to the Mediator complex subunit 12 family. In terms of assembly, may be a component of the Mediator complex, which is known to be composed of MED1, MED4, MED6, MED7, MED8, MED9, MED10, MED11, MED12, MED13, MED13L, MED14, MED15, MED16, MED17, MED18, MED19, MED20, MED21, MED22, MED23, MED24, MED25, MED26, MED27, MED29, MED30, MED31, CCNC, CDK8 and CDC2L6/CDK11. The MED12, MED13, CCNC and CDK8 subunits form a distinct module termed the CDK8 module. Mediator containing the CDK8 module is less active than Mediator lacking this module in supporting transcriptional activation. Individual preparations of the Mediator complex lacking one or more distinct subunits have been variously termed ARC, CRSP, DRIP, PC2, SMCC and TRAP.

The protein resides in the nucleus. In terms of biological role, may be a component of the Mediator complex, a coactivator involved in the regulated transcription of nearly all RNA polymerase II-dependent genes. Mediator functions as a bridge to convey information from gene-specific regulatory proteins to the basal RNA polymerase II transcription machinery. Mediator is recruited to promoters by direct interactions with regulatory proteins and serves as a scaffold for the assembly of a functional preinitiation complex with RNA polymerase II and the general transcription factors. This chain is Mediator of RNA polymerase II transcription subunit 12-like protein (MED12L), found in Homo sapiens (Human).